We begin with the raw amino-acid sequence, 316 residues long: MQILLANPRGFCAGVDRAISIVENALAIYGAPIYVRHEVVHNRYVVDSLRKRGAIFIEQISEVPDGAILIFSAHGVSQAVRNEAKSRDLTVFDATCPLVTKVHMEVARASRRGEESILIGHAGHPEVEGTMGQYSNPEGGMFLVESPEDVWTLNVKNEGKLSFMTQTTLSVDDTSDVIDALRKRFPKIVGPRKDDICYATTNRQEAVRALAEQADVVLVVGSKNSSNSNRLAELAQRMGRTAFLIDDAADIQEAWVKDAACVGVTAGASAPDILVQNVIARLREFGGGEAVTLEGREENIVFEVPKELRVDVREVE.

C12 contributes to the [4Fe-4S] cluster binding site. (2E)-4-hydroxy-3-methylbut-2-enyl diphosphate-binding residues include H41 and H74. The dimethylallyl diphosphate site is built by H41 and H74. Isopentenyl diphosphate contacts are provided by H41 and H74. A [4Fe-4S] cluster-binding site is contributed by C96. Residue H124 coordinates (2E)-4-hydroxy-3-methylbut-2-enyl diphosphate. A dimethylallyl diphosphate-binding site is contributed by H124. Residue H124 participates in isopentenyl diphosphate binding. Catalysis depends on E126, which acts as the Proton donor. Position 167 (T167) interacts with (2E)-4-hydroxy-3-methylbut-2-enyl diphosphate. Position 197 (C197) interacts with [4Fe-4S] cluster. S225, S226, N227, and S269 together coordinate (2E)-4-hydroxy-3-methylbut-2-enyl diphosphate. S225, S226, N227, and S269 together coordinate dimethylallyl diphosphate. 4 residues coordinate isopentenyl diphosphate: S225, S226, N227, and S269.

This sequence belongs to the IspH family. Homodimer. It depends on [4Fe-4S] cluster as a cofactor.

It catalyses the reaction isopentenyl diphosphate + 2 oxidized [2Fe-2S]-[ferredoxin] + H2O = (2E)-4-hydroxy-3-methylbut-2-enyl diphosphate + 2 reduced [2Fe-2S]-[ferredoxin] + 2 H(+). The catalysed reaction is dimethylallyl diphosphate + 2 oxidized [2Fe-2S]-[ferredoxin] + H2O = (2E)-4-hydroxy-3-methylbut-2-enyl diphosphate + 2 reduced [2Fe-2S]-[ferredoxin] + 2 H(+). It functions in the pathway isoprenoid biosynthesis; dimethylallyl diphosphate biosynthesis; dimethylallyl diphosphate from (2E)-4-hydroxy-3-methylbutenyl diphosphate: step 1/1. Its pathway is isoprenoid biosynthesis; isopentenyl diphosphate biosynthesis via DXP pathway; isopentenyl diphosphate from 1-deoxy-D-xylulose 5-phosphate: step 6/6. Catalyzes the conversion of 1-hydroxy-2-methyl-2-(E)-butenyl 4-diphosphate (HMBPP) into a mixture of isopentenyl diphosphate (IPP) and dimethylallyl diphosphate (DMAPP). Acts in the terminal step of the DOXP/MEP pathway for isoprenoid precursor biosynthesis. The chain is 4-hydroxy-3-methylbut-2-enyl diphosphate reductase from Salmonella paratyphi A (strain ATCC 9150 / SARB42).